The chain runs to 133 residues: Small ribosomal subunit protein eS24 (133 aa).

Met1 is modified (N-acetylmethionine). Position 9 is a phosphothreonine (Thr9). Residue Lys37 forms a Glycyl lysine isopeptide (Lys-Gly) (interchain with G-Cter in SUMO2) linkage. The tract at residues 92-133 (ARHGLYEKKKTSRKQRKERKNRMKKVRGTAKANVGAGKKPKE) is disordered. Residues 101 to 119 (KTSRKQRKERKNRMKKVRG) are compositionally biased toward basic residues.

The protein belongs to the eukaryotic ribosomal protein eS24 family. In terms of assembly, component of the small ribosomal subunit. Part of the small subunit (SSU) processome, composed of more than 70 proteins and the RNA chaperone small nucleolar RNA (snoRNA) U3.

It is found in the cytoplasm. It localises to the nucleus. The protein localises to the nucleolus. Functionally, component of the small ribosomal subunit. The ribosome is a large ribonucleoprotein complex responsible for the synthesis of proteins in the cell. Required for processing of pre-rRNA and maturation of 40S ribosomal subunits. Part of the small subunit (SSU) processome, first precursor of the small eukaryotic ribosomal subunit. During the assembly of the SSU processome in the nucleolus, many ribosome biogenesis factors, an RNA chaperone and ribosomal proteins associate with the nascent pre-rRNA and work in concert to generate RNA folding, modifications, rearrangements and cleavage as well as targeted degradation of pre-ribosomal RNA by the RNA exosome. The sequence is that of Small ribosomal subunit protein eS24 (RPS24) from Oryctolagus cuniculus (Rabbit).